Reading from the N-terminus, the 65-residue chain is Large ribosomal subunit protein bL28 (65 aa).

The interval 1–21 is disordered; that stretch reads MAKKDQLTLRGPLYGNNRSHS.

This sequence belongs to the bacterial ribosomal protein bL28 family.

The protein is Large ribosomal subunit protein bL28 of Mycoplasma pneumoniae (strain ATCC 29342 / M129 / Subtype 1) (Mycoplasmoides pneumoniae).